Consider the following 147-residue polypeptide: Large ribosomal subunit protein bL21 (147 aa).

Residues 115–147 (KSIKVGKPTPKSSSKKEETVKKETKPKSEKSTN) are disordered. Over residues 128–147 (SKKEETVKKETKPKSEKSTN) the composition is skewed to basic and acidic residues.

This sequence belongs to the bacterial ribosomal protein bL21 family. In terms of assembly, part of the 50S ribosomal subunit. Contacts protein L20.

Its function is as follows. This protein binds to 23S rRNA in the presence of protein L20. The chain is Large ribosomal subunit protein bL21 from Prochlorococcus marinus (strain MIT 9215).